The primary structure comprises 235 residues: uncharacterized protein (235 aa).

The N-acetyltransferase domain maps to 82–221 (LAFKKFPPDP…DTGELIRESP (140 aa)).

Belongs to the acetyltransferase family.

It localises to the golgi apparatus membrane. The protein localises to the endoplasmic reticulum membrane. This is an uncharacterized protein from Schizosaccharomyces pombe (strain 972 / ATCC 24843) (Fission yeast).